The chain runs to 154 residues: Phospholipase A2 OS1 (154 aa).

Positions 1–27 (MHPAHLLVLLAVCVSLLGAARIPPLPL) are cleaved as a signal peptide. Disulfide bonds link C38/C104, C54/C153, C56/C72, C71/C132, C78/C125, C88/C118, and C111/C123. G57 and G59 together coordinate Ca(2+). The active site involves H75. D76 provides a ligand contact to Ca(2+). D126 is a catalytic residue.

Belongs to the phospholipase A2 family. Group I subfamily. D49 sub-subfamily. In terms of assembly, monomer. Ca(2+) serves as cofactor. In terms of tissue distribution, expressed by the venom gland.

Its subcellular location is the secreted. The catalysed reaction is a 1,2-diacyl-sn-glycero-3-phosphocholine + H2O = a 1-acyl-sn-glycero-3-phosphocholine + a fatty acid + H(+). In terms of biological role, snake venom phospholipase A2 (PLA2) that has a low specific activity on phospholipid substrates, and is neither neurotoxic, nor myotoxic. Induces endothelial cell migration which is mediated, at least in part, by its hydrolytic products. Shows antimalarial activity, but is not able to potently inhibit HIV-1 replication. Binds in a calcium-independent fashion with very high affinity to a muscle-type (M-type) PLA2 receptor, but is a very poor ligand for neuronal-type (N-type) receptors. PLA2 catalyzes the calcium-dependent hydrolysis of the 2-acyl groups in 3-sn-phosphoglycerides. The sequence is that of Phospholipase A2 OS1 from Oxyuranus scutellatus scutellatus (Australian taipan).